A 237-amino-acid chain; its full sequence is Proteasome subunit beta 2 (237 aa).

A compositionally biased stretch (polar residues) spans M1–D14. Residues M1–G42 constitute a propeptide, removed in mature form; by autocatalysis. A disordered region spans residues M1 to T45. T43 acts as the Nucleophile in catalysis.

It belongs to the peptidase T1B family. In terms of assembly, the 20S proteasome core is composed of 14 alpha and 14 beta subunits that assemble into four stacked heptameric rings, resulting in a barrel-shaped structure. The two inner rings, each composed of seven catalytic beta subunits, are sandwiched by two outer rings, each composed of seven alpha subunits. The catalytic chamber with the active sites is on the inside of the barrel. Has a gated structure, the ends of the cylinder being occluded by the N-termini of the alpha-subunits. Is capped at one or both ends by the proteasome regulatory ATPase, PAN.

It is found in the cytoplasm. The enzyme catalyses Cleavage of peptide bonds with very broad specificity.. The formation of the proteasomal ATPase PAN-20S proteasome complex, via the docking of the C-termini of PAN into the intersubunit pockets in the alpha-rings, triggers opening of the gate for substrate entry. Interconversion between the open-gate and close-gate conformations leads to a dynamic regulation of the 20S proteasome proteolysis activity. In terms of biological role, component of the proteasome core, a large protease complex with broad specificity involved in protein degradation. The protein is Proteasome subunit beta 2 of Haloterrigena turkmenica (strain ATCC 51198 / DSM 5511 / JCM 9101 / NCIMB 13204 / VKM B-1734 / 4k) (Halococcus turkmenicus).